The primary structure comprises 180 residues: Ribulose bisphosphate carboxylase small subunit, chloroplastic 1 (180 aa).

A chloroplast-targeting transit peptide spans 1–56; it reads MASSVISSAAVATRTNVAQASMVAPFNGLKSAVSFPVSSKQNLDITSIASNGGRVQ.

This sequence belongs to the RuBisCO small chain family. Heterohexadecamer of 8 large and 8 small subunits.

It localises to the plastid. It is found in the chloroplast. Its function is as follows. RuBisCO catalyzes two reactions: the carboxylation of D-ribulose 1,5-bisphosphate, the primary event in carbon dioxide fixation, as well as the oxidative fragmentation of the pentose substrate. Both reactions occur simultaneously and in competition at the same active site. Although the small subunit is not catalytic it is essential for maximal activity. This Petunia hybrida (Petunia) protein is Ribulose bisphosphate carboxylase small subunit, chloroplastic 1.